The chain runs to 426 residues: Serine--tRNA ligase (426 aa).

233 to 235 (TAE) is an L-serine binding site. An ATP-binding site is contributed by 264 to 266 (RRE). An L-serine-binding site is contributed by glutamate 287. ATP is bound at residue 351–354 (EISS). Serine 386 contributes to the L-serine binding site.

This sequence belongs to the class-II aminoacyl-tRNA synthetase family. Type-1 seryl-tRNA synthetase subfamily. Homodimer. The tRNA molecule binds across the dimer.

The protein localises to the cytoplasm. It catalyses the reaction tRNA(Ser) + L-serine + ATP = L-seryl-tRNA(Ser) + AMP + diphosphate + H(+). The catalysed reaction is tRNA(Sec) + L-serine + ATP = L-seryl-tRNA(Sec) + AMP + diphosphate + H(+). It participates in aminoacyl-tRNA biosynthesis; selenocysteinyl-tRNA(Sec) biosynthesis; L-seryl-tRNA(Sec) from L-serine and tRNA(Sec): step 1/1. Catalyzes the attachment of serine to tRNA(Ser). Is also able to aminoacylate tRNA(Sec) with serine, to form the misacylated tRNA L-seryl-tRNA(Sec), which will be further converted into selenocysteinyl-tRNA(Sec). The protein is Serine--tRNA ligase of Thermosipho africanus (strain TCF52B).